The sequence spans 277 residues: N-acetylmuramic acid 6-phosphate etherase (277 aa).

The SIS domain maps to 53 to 216 (IIPRVKKGGR…STTIMIELGR (164 aa)). Glu81 functions as the Proton donor in the catalytic mechanism. The active site involves Glu112.

Belongs to the GCKR-like family. MurNAc-6-P etherase subfamily. Homodimer.

The catalysed reaction is N-acetyl-D-muramate 6-phosphate + H2O = N-acetyl-D-glucosamine 6-phosphate + (R)-lactate. It participates in amino-sugar metabolism; N-acetylmuramate degradation. Specifically catalyzes the cleavage of the D-lactyl ether substituent of MurNAc 6-phosphate, producing GlcNAc 6-phosphate and D-lactate. In Bacteroides thetaiotaomicron (strain ATCC 29148 / DSM 2079 / JCM 5827 / CCUG 10774 / NCTC 10582 / VPI-5482 / E50), this protein is N-acetylmuramic acid 6-phosphate etherase.